A 320-amino-acid chain; its full sequence is Malate dehydrogenase (320 aa).

NAD(+) contacts are provided by residues 10–15 (GSGMIG) and Asp-34. Arg-83 and Arg-89 together coordinate substrate. Residues Asn-96 and 119–121 (ITN) contribute to the NAD(+) site. Substrate is bound by residues Asn-121 and Arg-152. The active-site Proton acceptor is the His-176.

This sequence belongs to the LDH/MDH superfamily. MDH type 3 family.

It catalyses the reaction (S)-malate + NAD(+) = oxaloacetate + NADH + H(+). Its function is as follows. Catalyzes the reversible oxidation of malate to oxaloacetate. This chain is Malate dehydrogenase, found in Brucella anthropi (strain ATCC 49188 / DSM 6882 / CCUG 24695 / JCM 21032 / LMG 3331 / NBRC 15819 / NCTC 12168 / Alc 37) (Ochrobactrum anthropi).